A 201-amino-acid polypeptide reads, in one-letter code: 3-isopropylmalate dehydratase small subunit (201 aa).

The protein belongs to the LeuD family. LeuD type 1 subfamily. As to quaternary structure, heterodimer of LeuC and LeuD.

The catalysed reaction is (2R,3S)-3-isopropylmalate = (2S)-2-isopropylmalate. It participates in amino-acid biosynthesis; L-leucine biosynthesis; L-leucine from 3-methyl-2-oxobutanoate: step 2/4. Catalyzes the isomerization between 2-isopropylmalate and 3-isopropylmalate, via the formation of 2-isopropylmaleate. The protein is 3-isopropylmalate dehydratase small subunit of Salmonella arizonae (strain ATCC BAA-731 / CDC346-86 / RSK2980).